We begin with the raw amino-acid sequence, 59 residues long: Large ribosomal subunit protein uL30 (59 aa).

Belongs to the universal ribosomal protein uL30 family. As to quaternary structure, part of the 50S ribosomal subunit.

This chain is Large ribosomal subunit protein uL30, found in Streptococcus agalactiae serotype Ia (strain ATCC 27591 / A909 / CDC SS700).